Consider the following 228-residue polypeptide: L-ribulose-5-phosphate 4-epimerase UlaF (228 aa).

Residues 26 to 27 (GN), 43 to 44 (SG), and 72 to 73 (SS) contribute to the substrate site. 3 residues coordinate Zn(2+): D74, H93, and H95. Residue D118 is the Proton donor/acceptor of the active site. H167 is a Zn(2+) binding site. Y225 (proton donor/acceptor) is an active-site residue.

It belongs to the aldolase class II family. AraD/FucA subfamily. Zn(2+) serves as cofactor.

The catalysed reaction is L-ribulose 5-phosphate = D-xylulose 5-phosphate. The protein operates within cofactor degradation; L-ascorbate degradation; D-xylulose 5-phosphate from L-ascorbate: step 4/4. Its function is as follows. Catalyzes the isomerization of L-ribulose 5-phosphate to D-xylulose 5-phosphate. Is involved in the anaerobic L-ascorbate utilization. The polypeptide is L-ribulose-5-phosphate 4-epimerase UlaF (Shigella boydii serotype 18 (strain CDC 3083-94 / BS512)).